Reading from the N-terminus, the 227-residue chain is UPF0758 protein Dred_2549 (227 aa).

The MPN domain maps to 105-227 (IIRCPEDVCG…FTSLKSKGLI (123 aa)). H176, H178, and D189 together coordinate Zn(2+). Residues 176-189 (HNHPSGDPTPSRED) carry the JAMM motif motif.

The protein belongs to the UPF0758 family.

This Desulforamulus reducens (strain ATCC BAA-1160 / DSM 100696 / MI-1) (Desulfotomaculum reducens) protein is UPF0758 protein Dred_2549.